Here is a 480-residue protein sequence, read N- to C-terminus: Glutamate--tRNA ligase (480 aa).

The short motif at 21–31 is the 'HIGH' region element; the sequence is PSPTGYLHVGG. Residues cysteine 110, cysteine 112, cysteine 137, and histidine 139 each contribute to the Zn(2+) site. The 'KMSKS' region motif lies at 248–252; sequence KLSKR. Lysine 251 provides a ligand contact to ATP.

The protein belongs to the class-I aminoacyl-tRNA synthetase family. Glutamate--tRNA ligase type 1 subfamily. In terms of assembly, monomer. Zn(2+) is required as a cofactor.

Its subcellular location is the cytoplasm. The catalysed reaction is tRNA(Glu) + L-glutamate + ATP = L-glutamyl-tRNA(Glu) + AMP + diphosphate. Catalyzes the attachment of glutamate to tRNA(Glu) in a two-step reaction: glutamate is first activated by ATP to form Glu-AMP and then transferred to the acceptor end of tRNA(Glu). The protein is Glutamate--tRNA ligase of Haemophilus influenzae (strain ATCC 51907 / DSM 11121 / KW20 / Rd).